The chain runs to 571 residues: Proline--tRNA ligase (571 aa).

It belongs to the class-II aminoacyl-tRNA synthetase family. ProS type 1 subfamily. As to quaternary structure, homodimer.

The protein resides in the cytoplasm. The catalysed reaction is tRNA(Pro) + L-proline + ATP = L-prolyl-tRNA(Pro) + AMP + diphosphate. Functionally, catalyzes the attachment of proline to tRNA(Pro) in a two-step reaction: proline is first activated by ATP to form Pro-AMP and then transferred to the acceptor end of tRNA(Pro). As ProRS can inadvertently accommodate and process non-cognate amino acids such as alanine and cysteine, to avoid such errors it has two additional distinct editing activities against alanine. One activity is designated as 'pretransfer' editing and involves the tRNA(Pro)-independent hydrolysis of activated Ala-AMP. The other activity is designated 'posttransfer' editing and involves deacylation of mischarged Ala-tRNA(Pro). The misacylated Cys-tRNA(Pro) is not edited by ProRS. This is Proline--tRNA ligase from Actinobacillus succinogenes (strain ATCC 55618 / DSM 22257 / CCUG 43843 / 130Z).